The primary structure comprises 313 residues: Ribosomal RNA small subunit methyltransferase H (313 aa).

Residues 35 to 37 (GGH), D55, F80, D102, and Q109 each bind S-adenosyl-L-methionine.

The protein belongs to the methyltransferase superfamily. RsmH family.

Its subcellular location is the cytoplasm. It catalyses the reaction cytidine(1402) in 16S rRNA + S-adenosyl-L-methionine = N(4)-methylcytidine(1402) in 16S rRNA + S-adenosyl-L-homocysteine + H(+). Functionally, specifically methylates the N4 position of cytidine in position 1402 (C1402) of 16S rRNA. This is Ribosomal RNA small subunit methyltransferase H from Shewanella frigidimarina (strain NCIMB 400).